We begin with the raw amino-acid sequence, 459 residues long: Type I restriction enzyme HindI specificity subunit (459 aa).

It belongs to the type-I restriction system S methylase family. As to quaternary structure, the type I restriction/modification system is composed of three polypeptides R, M and S; the restriction enzyme has stoichiometry R(2)M(2)S(1) while the methyltransferase is M(2)S(1).

Its function is as follows. The specificity (S) subunit of a type I restriction enzyme; this subunit dictates DNA sequence specificity. The M and S subunits together form a methyltransferase (MTase) that methylates adenosines in the sequence 5'-RAACN(5)TAG-3'. Methylation protects against cleavage by HindI. In the presence of the R subunit the complex can also act as an endonuclease, binding to the same target sequence but cutting the DNA some distance from this site. Whether the DNA is cut or modified depends on the methylation state of the target sequence. When the target site is unmodified, the DNA is cut. When the target site is hemimethylated, the complex acts as a maintenance MTase modifying the DNA so that both strands become methylated. After locating a non-methylated recognition site, the enzyme complex serves as a molecular motor that translocates DNA in an ATP-dependent manner until a collision occurs that triggers cleavage. The chain is Type I restriction enzyme HindI specificity subunit from Haemophilus influenzae (strain ATCC 51907 / DSM 11121 / KW20 / Rd).